We begin with the raw amino-acid sequence, 883 residues long: Phosphoenolpyruvate carboxylase (883 aa).

Active-site residues include His138 and Lys546.

It belongs to the PEPCase type 1 family. It depends on Mg(2+) as a cofactor.

The catalysed reaction is oxaloacetate + phosphate = phosphoenolpyruvate + hydrogencarbonate. Its function is as follows. Forms oxaloacetate, a four-carbon dicarboxylic acid source for the tricarboxylic acid cycle. The chain is Phosphoenolpyruvate carboxylase from Erwinia tasmaniensis (strain DSM 17950 / CFBP 7177 / CIP 109463 / NCPPB 4357 / Et1/99).